Consider the following 147-residue polypeptide: uncharacterized protein (147 aa).

This sequence to M.jannaschii MJ0215.

This is an uncharacterized protein from Methanocaldococcus jannaschii (strain ATCC 43067 / DSM 2661 / JAL-1 / JCM 10045 / NBRC 100440) (Methanococcus jannaschii).